A 667-amino-acid chain; its full sequence is Protein adenylyltransferase SelO, mitochondrial (667 aa).

The transit peptide at M1 to A6 directs the protein to the mitochondrion. Residues G154, G156, K177, D189, G190, R247, and R254 each contribute to the ATP site. D341 (proton acceptor) is an active-site residue. Residues N342 and D351 each coordinate Mg(2+). D351 contacts ATP. The disordered stretch occupies residues Y628–N652. Position 635 is a phosphothreonine (T635). A Phosphoserine modification is found at S651. Position 665 (U665) is a non-standard amino acid, selenocysteine.

It belongs to the SELO family. Requires Mg(2+) as cofactor.

The protein resides in the mitochondrion. It catalyses the reaction L-tyrosyl-[protein] + ATP = O-(5'-adenylyl)-L-tyrosyl-[protein] + diphosphate. The enzyme catalyses L-threonyl-[protein] + ATP = 3-O-(5'-adenylyl)-L-threonyl-[protein] + diphosphate. It carries out the reaction L-seryl-[protein] + ATP = 3-O-(5'-adenylyl)-L-seryl-[protein] + diphosphate. In terms of biological role, catalyzes the transfer of adenosine 5'-monophosphate (AMP) to Ser, Thr and Tyr residues of target proteins (AMPylation). May be a redox-active mitochondrial selenoprotein which interacts with a redox target protein. In Mus musculus (Mouse), this protein is Protein adenylyltransferase SelO, mitochondrial.